The sequence spans 47 residues: MAVYTLDLLAQLPEAYQAFGPLIDILPIIPLFFLLLAFVWQASVGFR.

A propeptide spanning residues 1 to 10 (MAVYTLDLLA) is cleaved from the precursor. The helical transmembrane segment at 19 to 39 (FGPLIDILPIIPLFFLLLAFV) threads the bilayer.

It belongs to the PsbK family. In terms of assembly, PSII is composed of 1 copy each of membrane proteins PsbA, PsbB, PsbC, PsbD, PsbE, PsbF, PsbH, PsbI, PsbJ, PsbK, PsbL, PsbM, PsbT, PsbX, PsbY, PsbZ, Psb30/Ycf12, peripheral proteins PsbO, CyanoQ (PsbQ), PsbU, PsbV and a large number of cofactors. It forms dimeric complexes.

The protein localises to the cellular thylakoid membrane. Functionally, one of the components of the core complex of photosystem II (PSII). PSII is a light-driven water:plastoquinone oxidoreductase that uses light energy to abstract electrons from H(2)O, generating O(2) and a proton gradient subsequently used for ATP formation. It consists of a core antenna complex that captures photons, and an electron transfer chain that converts photonic excitation into a charge separation. The chain is Photosystem II reaction center protein K from Synechococcus sp. (strain CC9311).